The sequence spans 471 residues: Trigger factor (471 aa).

Residues 162–243 (GDFVVMDLVA…VSQVQEQELP (82 aa)) enclose the PPIase FKBP-type domain. The disordered stretch occupies residues 436–471 (LRPDGTIGEPEDEIEAETEIEIEPAAETDTEADTEQ). Positions 444-471 (EPEDEIEAETEIEIEPAAETDTEADTEQ) are enriched in acidic residues.

The protein belongs to the FKBP-type PPIase family. Tig subfamily.

The protein localises to the cytoplasm. The enzyme catalyses [protein]-peptidylproline (omega=180) = [protein]-peptidylproline (omega=0). In terms of biological role, involved in protein export. Acts as a chaperone by maintaining the newly synthesized protein in an open conformation. Functions as a peptidyl-prolyl cis-trans isomerase. The sequence is that of Trigger factor from Nocardioides sp. (strain ATCC BAA-499 / JS614).